The chain runs to 364 residues: MSNSLGKLFQITSFGESHGDCVGVVIDGVPAGLAINVDEIQIEVDKRKSGAKAHTTPRREDDRIEIFSGIFNNFTTGAPICLVIWNKNIDSSEYERTRSKIRPGHADFTGFMKYGGFNDYRGGGRFSGRITAGHVMAGAIARKLISTIGIEVIGYTAELGGITAKLPKHKDIRQNISQSDVNCPDLAASKQMVALIQQAAEEGDSLGGVVECIGLNLPVGLGEPVFDTLEGELAKAIFAIPAVKGVEFGAGFGASRLRGSKNNDPFNIQSDQIRTTSNNCGGILGGISDGMPLHIRVAVKPTPSISLSQPTVNLDTMTNTSLEIRGRHDTCIVPRAVSVVEAMTCIVLADLALRAGIIPRVIKQ.

Residue R47 participates in NADP(+) binding. Residues 125–127 (RFS), G285, 300–304 (KPTPS), and R327 contribute to the FMN site.

Belongs to the chorismate synthase family. As to quaternary structure, homotetramer. It depends on FMNH2 as a cofactor.

The enzyme catalyses 5-O-(1-carboxyvinyl)-3-phosphoshikimate = chorismate + phosphate. The protein operates within metabolic intermediate biosynthesis; chorismate biosynthesis; chorismate from D-erythrose 4-phosphate and phosphoenolpyruvate: step 7/7. In terms of biological role, catalyzes the anti-1,4-elimination of the C-3 phosphate and the C-6 proR hydrogen from 5-enolpyruvylshikimate-3-phosphate (EPSP) to yield chorismate, which is the branch point compound that serves as the starting substrate for the three terminal pathways of aromatic amino acid biosynthesis. This reaction introduces a second double bond into the aromatic ring system. The sequence is that of Chorismate synthase from Dehalococcoides mccartyi (strain ATCC BAA-2100 / JCM 16839 / KCTC 5957 / BAV1).